Here is a 659-residue protein sequence, read N- to C-terminus: Sodium/nucleoside cotransporter 2 (659 aa).

Residues 1–10 (MAKSEGRKSA) show a composition bias toward basic and acidic residues. Residues 1 to 22 (MAKSEGRKSASQDTSENGMENP) are disordered. S46 carries the post-translational modification Phosphoserine. The next 14 membrane-spanning stretches (helical) occupy residues 81 to 101 (ILLG…CILN), 105 to 124 (ALAL…CHFL), 149 to 167 (KRVF…LALD), 173 to 193 (EQLI…ACSK), 201 to 221 (RTVF…IRTE), 234 to 254 (IQIF…DTLV), 261 to 281 (QSLP…YLGL), 296 to 315 (TMGT…FVGM), 337 to 356 (VMTG…FISF), 363 to 382 (LISA…KLVY), 424 to 444 (VAAN…TLSW), 455 to 475 (TFQV…GVQW), 530 to 550 (ATFS…LGGL), and 568 to 588 (ALFT…ILYV).

This sequence belongs to the concentrative nucleoside transporter (CNT) (TC 2.A.41) family. As to expression, expressed in liver (in bile canalicular membrane vesicles (CMV) but not in sinusoidal vesicles), jejunum, spleen and heart. Also expressed in brain and skeletal muscle. Not expressed in kidney, muscle and lung.

Its subcellular location is the membrane. The protein localises to the apicolateral cell membrane. The catalysed reaction is adenosine(out) + Na(+)(out) = adenosine(in) + Na(+)(in). It carries out the reaction inosine(out) + Na(+)(out) = inosine(in) + Na(+)(in). The enzyme catalyses guanosine(out) + Na(+)(out) = guanosine(in) + Na(+)(in). It catalyses the reaction uridine(out) + Na(+)(out) = uridine(in) + Na(+)(in). With respect to regulation, inhibited by formycin B, partially inhibited by purine analog ara-A. Its function is as follows. Sodium-dependent and purine-selective. Exhibits the transport characteristics of the nucleoside transport system cif or N1 subtype (N1/cif) (selective for purine nucleosides and uridine). Accepts purine, analogs of purine nucleosides and uridine, and exhibits high affinity for adenosine. May contribute to regulate the transport of organic compounds in testes across the blood-testis-barrier. The protein is Sodium/nucleoside cotransporter 2 (Slc28a2) of Rattus norvegicus (Rat).